We begin with the raw amino-acid sequence, 781 residues long: Acyl-CoA dehydrogenase family member 11 (781 aa).

Lys177 bears the N6-acetyllysine mark. Tyr325 is subject to Phosphotyrosine. Residue Lys392 is modified to N6-succinyllysine. FAD is bound by residues 505–515 (FCMTEPDVASS), 513–515 (ASS), 539–541 (WSS), and Ser541. Residue Ser515 coordinates substrate. Position 630–633 (630–633 (GPGR)) interacts with substrate. Residues Arg658, Gln728, and 728 to 732 (QVCGG) contribute to the FAD site. Gly756 is a binding site for substrate. FAD contacts are provided by residues 757–759 (PDE) and Glu759.

Belongs to the acyl-CoA dehydrogenase family. Homodimer. It depends on FAD as a cofactor.

Its subcellular location is the peroxisome. The protein localises to the mitochondrion membrane. It carries out the reaction a 2,3-saturated acyl-CoA + oxidized [electron-transfer flavoprotein] + H(+) = a (2E)-enoyl-CoA + reduced [electron-transfer flavoprotein]. The enzyme catalyses docosanoyl-CoA + oxidized [electron-transfer flavoprotein] + H(+) = (2E)-docosenoyl-CoA + reduced [electron-transfer flavoprotein]. The catalysed reaction is tetracosanoyl-CoA + oxidized [electron-transfer flavoprotein] + H(+) = (2E)-tetracosenoyl-CoA + reduced [electron-transfer flavoprotein]. It catalyses the reaction eicosanoyl-CoA + oxidized [electron-transfer flavoprotein] + H(+) = (2E)-eicosenoyl-CoA + reduced [electron-transfer flavoprotein]. It carries out the reaction hexacosanoyl-CoA + oxidized [electron-transfer flavoprotein] + H(+) = (2E)-hexacosenoyl-CoA + reduced [electron-transfer flavoprotein]. The enzyme catalyses tricosanoyl-CoA + oxidized [electron-transfer flavoprotein] + H(+) = (2E)-tricosenoyl-CoA + reduced [electron-transfer flavoprotein]. Its pathway is lipid metabolism; fatty acid beta-oxidation. Functionally, acyl-CoA dehydrogenase, that exhibits maximal activity towards saturated C22-CoA. Probably participates in beta-oxydation and energy production but could also play a role in the metabolism of specific fatty acids to control fatty acids composition of cellular lipids in brain. The sequence is that of Acyl-CoA dehydrogenase family member 11 (ACAD11) from Pongo abelii (Sumatran orangutan).